The chain runs to 235 residues: uncharacterized protein (235 aa).

A signal peptide spans 1–24 (MSDRMKLKGLLAFCLLFLSSFVLA).

This is an uncharacterized protein from Haemophilus influenzae (strain ATCC 51907 / DSM 11121 / KW20 / Rd).